The sequence spans 956 residues: MNPTITEHDFRFPRRPAAPGRDPGSDSSDDPLPASLRELNSDRQSAFNDAQNKLARTEAFEDLRNGMARVKDTPELLQEQDPLAAQVWRFFSKTKTMLPNQERMENLTWRMMHVNLRKRQQEESARISSPPLKTNAPSGIAQQLRQTPTQKKSSAGEMSLDDFIDSSHGSATSGLASSSPEAGKPDSTSTNAISSAIPINKSRKNEVAAQSQFNPQSVPAAAQRGRMDNEFGYLKRHHRKTSIDDRKTTRKRPRGCSPFQVPSIVTDTLSNDLDADAGFNDYTLDSTNGINVSQPMTTNGRSPFTIDAFNVPSEPMIHSAGPYQQNFSFSPSTSPMASNGFPQHMFNGQSITNSLANPDLYSPPGSAYQSQVSTPHPMNENGDGSFFFGNGMDVRHQRSHSFRQPSATQNMQTQPFSYNGNGGGGFFPQSMASNGMSSSYATSGNTFGHIDPAQVFQNEQTAQSPGFNMMQENNAFNFGGHSDDEEDGGVFADRNLALSSEFSPGAMDEPAVDFGTNPMGWDATLPGNFSTQAARYPAGPPRRQNTIGGMPSEFGEKNGDYAEGGLARSQSQSFHGNQADARRRIPRNASTTAIPNSQMQYEQQGVQGHTNSPPADMANGHTSGFSSVVHSRPSSPPPGSKNGSTTNLQQQGNNQGGDAPTTCTNCATQTTPLWRRNPEGQPLCNACGLFLKLHGVVRPLSLKTDVIKKRNRGSGSNVPGATSGSRSKKGATSTAVSGTNTRKNSSLAISRTASTTNVQVAPTPAIAPAASQSRAGSANEGESPMSGGGNTAGSTPTSHNSGGSVAVGGKGVVPIAAAPPKNMPGPGAAAAARTVALGPKRQRRHSKPSPANASLIGMNNANHSDAMEVDSPENSTGSNEAATRPSGFGTTATSASFAGLTSNSFGMSASTRSMITPGMLGGGMSTSALSSTGGLLSSGSAAATVPQEWDWLTMSL.

The span at 1–12 shows a compositional bias: basic and acidic residues; the sequence is MNPTITEHDFRF. Disordered regions lie at residues 1 to 51, 120 to 222, 240 to 262, 348 to 373, and 524 to 661; these read MNPT…NDAQ, QQEE…PAAA, KTSI…FQVP, GQSI…SQVS, and TLPG…DAPT. A compositionally biased stretch (low complexity) spans 15–37; it reads RPAAPGRDPGSDSSDDPLPASLR. 4 stretches are compositionally biased toward polar residues: residues 42–51, 131–153, 167–194, and 208–217; these read DRQSAFNDAQ, PLKT…QKKS, SHGS…NAIS, and AAQSQFNPQS. Over residues 588-613 the composition is skewed to polar residues; that stretch reads NASTTAIPNSQMQYEQQGVQGHTNSP. 2 stretches are compositionally biased toward low complexity: residues 623–633 and 640–661; these read SGFSSVVHSRP and SKNG…DAPT. The GATA-type zinc finger occupies 663 to 687; it reads CTNCATQTTPLWRRNPEGQPLCNAC. The tract at residues 708-890 is disordered; sequence KKRNRGSGSN…AATRPSGFGT (183 aa). Residues 713-760 are compositionally biased toward polar residues; the sequence is GSGSNVPGATSGSRSKKGATSTAVSGTNTRKNSSLAISRTASTTNVQV. Over residues 812–839 the composition is skewed to low complexity; the sequence is VVPIAAAPPKNMPGPGAAAAARTVALGP. 2 stretches are compositionally biased toward polar residues: residues 849-863 and 872-881; these read SPAN…NANH and PENSTGSNEA.

It is found in the nucleus. Major nitrogen regulatory protein; activates expression of nitrogen-regulated genes. This Pyricularia oryzae (strain 70-15 / ATCC MYA-4617 / FGSC 8958) (Rice blast fungus) protein is Nitrogen regulatory protein NUT1 (NUT1).